The following is a 535-amino-acid chain: Cytochrome c oxidase subunit 1 (535 aa).

The chain crosses the membrane as a helical span at residues 17–37; sequence ILYFIFAIFSGVIGSTMSLII. Ca(2+) is bound by residues E40, A43, and G45. Transmembrane regions (helical) follow at residues 58 to 78, 104 to 124, 147 to 167, 184 to 204, 236 to 256, and 268 to 288; these read VLVV…GLVG, FWLL…ESWA, LGIF…INFI, PLFV…LPVL, LFWF…FGII, and VFGE…GFLV. A Fe(II)-heme a-binding site is contributed by H63. H242 is a Cu cation binding site. Residues 242 to 246 constitute a cross-link (1'-histidyl-3'-tyrosine (His-Tyr)); that stretch reads HPEVY. Residue Y246 participates in O2 binding. Cu cation contacts are provided by H291 and H292. The next 2 helical transmembrane spans lie at 311 to 331 and 339 to 359; these read MVIA…LYGG and MLYA…GVAL. 2 residues coordinate Mg(2+): H369 and D370. Transmembrane regions (helical) follow at residues 373–393 and 413–433; these read YVVG…LFAG and IQFW…HFLG. H377 is a binding site for heme a3. H379 lines the Fe(II)-heme a pocket. P442 contributes to the Ca(2+) binding site. Residues 453–473 traverse the membrane as a helical segment; it reads YVSSIGSVIAIISLALFIYII.

It belongs to the heme-copper respiratory oxidase family. Component of the cytochrome c oxidase (complex IV, CIV), a multisubunit enzyme composed of a catalytic core of 3 subunits and several supernumerary subunits. The complex exists as a monomer or a dimer and forms supercomplexes (SCs) in the inner mitochondrial membrane with ubiquinol-cytochrome c oxidoreductase (cytochrome b-c1 complex, complex III, CIII). It depends on heme as a cofactor. Cu cation is required as a cofactor.

It localises to the mitochondrion inner membrane. The catalysed reaction is 4 Fe(II)-[cytochrome c] + O2 + 8 H(+)(in) = 4 Fe(III)-[cytochrome c] + 2 H2O + 4 H(+)(out). Its pathway is energy metabolism; oxidative phosphorylation. In terms of biological role, component of the cytochrome c oxidase, the last enzyme in the mitochondrial electron transport chain which drives oxidative phosphorylation. The respiratory chain contains 3 multisubunit complexes succinate dehydrogenase (complex II, CII), ubiquinol-cytochrome c oxidoreductase (cytochrome b-c1 complex, complex III, CIII) and cytochrome c oxidase (complex IV, CIV), that cooperate to transfer electrons derived from NADH and succinate to molecular oxygen, creating an electrochemical gradient over the inner membrane that drives transmembrane transport and the ATP synthase. Cytochrome c oxidase is the component of the respiratory chain that catalyzes the reduction of oxygen to water. Electrons originating from reduced cytochrome c in the intermembrane space (IMS) are transferred via the dinuclear copper A center (CU(A)) of subunit 2 and heme A of subunit 1 to the active site in subunit 1, a binuclear center (BNC) formed by heme A3 and copper B (CU(B)). The BNC reduces molecular oxygen to 2 water molecules using 4 electrons from cytochrome c in the IMS and 4 protons from the mitochondrial matrix. The polypeptide is Cytochrome c oxidase subunit 1 (COX1) (Wickerhamomyces canadensis (Yeast)).